The primary structure comprises 662 residues: Polyunsaturated fatty acid (12S)/(13S)-lipoxygenase, epidermal-type (662 aa).

The PLAT domain maps to Val2 to Leu114. Positions Lys115–Ile662 constitute a Lipoxygenase domain. Residues His360, His365, His540, and Ile662 each coordinate Fe cation.

It belongs to the lipoxygenase family. The cofactor is Fe cation. As to expression, expressed in epidermis.

The protein resides in the cytoplasm. It catalyses the reaction (5Z,8Z,11Z,14Z)-eicosatetraenoate + O2 = (12S)-hydroperoxy-(5Z,8Z,10E,14Z)-eicosatetraenoate. The enzyme catalyses 1-O-methyl-(9Z,12Z)-octadecadienoate + O2 = 1-O-methyl-(13S)-hydroperoxy-(9Z,11E)-octadecadienoate. It carries out the reaction (8Z,11Z,14Z)-eicosatrienoate + O2 = (12S)-hydroperoxy-(8Z,10E,14Z)-eicosatrienoate. The catalysed reaction is (5Z,8Z,11Z)-eicosatrienoate + O2 = (12S)-hydroperoxy-(5Z,8Z,10E)-eicosatrienoate. It catalyses the reaction 1-O-methyl-(5Z,8Z,11Z,14Z)-eicosatetraenoate + O2 = 1-O-methyl-(12S)-hydroperoxy-(5Z,8Z,10E,14Z)-eicosatetraenoate. The enzyme catalyses (9Z,12Z)-octadecadienoate + O2 = (13S)-hydroperoxy-(9Z,11E)-octadecadienoate. It carries out the reaction (4Z,7Z,10Z,13Z,16Z,19Z)-docosahexaenoate + O2 = (14S)-hydroperoxy-(4Z,7Z,10Z,12E,16Z,19Z)-docosahexaenoate. It participates in lipid metabolism; hydroperoxy eicosatetraenoic acid biosynthesis. Its activity is regulated as follows. Arachidonate 12-lipoxygenase activity is decreased when the pH decreases from 7.4 to 6.0. Its function is as follows. Catalyzes the regio and stereo-specific incorporation of a single molecule of dioxygen into free and esterified polyunsaturated fatty acids generating lipid hydroperoxides that can be further reduced to the corresponding hydroxy species. Shows increasing catalytic activity within the series arachidonic acid &lt; 5,8,11-eicosatrienoic acid &lt; linoleic acid &lt; 8,11,14-eicosatrienoic acid. The polypeptide is Polyunsaturated fatty acid (12S)/(13S)-lipoxygenase, epidermal-type (Mus musculus (Mouse)).